The sequence spans 504 residues: UDP-N-acetylmuramoylalanine--D-glutamate ligase (504 aa).

129-135 is a binding site for ATP; that stretch reads GTNGKTT.

It belongs to the MurCDEF family.

Its subcellular location is the cytoplasm. The catalysed reaction is UDP-N-acetyl-alpha-D-muramoyl-L-alanine + D-glutamate + ATP = UDP-N-acetyl-alpha-D-muramoyl-L-alanyl-D-glutamate + ADP + phosphate + H(+). The protein operates within cell wall biogenesis; peptidoglycan biosynthesis. Cell wall formation. Catalyzes the addition of glutamate to the nucleotide precursor UDP-N-acetylmuramoyl-L-alanine (UMA). The chain is UDP-N-acetylmuramoylalanine--D-glutamate ligase from Burkholderia thailandensis (strain ATCC 700388 / DSM 13276 / CCUG 48851 / CIP 106301 / E264).